A 327-amino-acid chain; its full sequence is PDZ and LIM domain protein 1 (327 aa).

The residue at position 2 (Thr-2) is an N-acetylthreonine. The PDZ domain maps to 3-85 (TQQIVLQGPG…NMTLTVSRSE (83 aa)). Ser-90 and Ser-130 each carry phosphoserine. Residue Tyr-142 is modified to Phosphotyrosine. The tract at residues 161–184 (VESKTSASGEEANSRPVVQPHPSG) is disordered. The LIM zinc-binding domain maps to 256–315 (PICDKCGTGIVGVFVKLRDHHRHPECYVCTDCGINLKQKGHFFVEDQIYCEKHARERVTP). Zn(2+)-binding residues include Cys-258, Cys-261, His-278, Cys-281, Cys-284, Cys-287, Cys-305, and His-308. Thr-314 carries the post-translational modification Phosphothreonine. Residue Tyr-319 is modified to Phosphotyrosine.

As to quaternary structure, interacts with ACTN1, ACTN2 and ACTN4. Interacts with PDLIM4. Expressed in heart, lung, spleen, testis and skeletal muscle.

It is found in the cytoplasm. Its subcellular location is the cytoskeleton. The protein localises to the myofibril. The protein resides in the sarcomere. It localises to the z line. Functionally, cytoskeletal protein that may act as an adapter that brings other proteins (like kinases) to the cytoskeleton. Involved in assembly, disassembly and directioning of stress fibers in fibroblasts. Required for the localization of ACTN1 and PALLD to stress fibers. Required for cell migration and in maintaining cell polarity of fibroblasts. The protein is PDZ and LIM domain protein 1 (Pdlim1) of Mus musculus (Mouse).